We begin with the raw amino-acid sequence, 187 residues long: UPF0301 protein Noc_0368 (187 aa).

This sequence belongs to the UPF0301 (AlgH) family.

This chain is UPF0301 protein Noc_0368, found in Nitrosococcus oceani (strain ATCC 19707 / BCRC 17464 / JCM 30415 / NCIMB 11848 / C-107).